A 179-amino-acid chain; its full sequence is Interferon lambda-4 (179 aa).

The first 21 residues, 1-21 (MRPSVWAAVAAGLWVLCTVIA), serve as a signal peptide directing secretion. A disordered region spans residues 130–149 (SSRKVPGAQKRRHKPRRADS).

This sequence belongs to the lambda interferon family.

The protein resides in the cytoplasm. Its subcellular location is the secreted. Cytokine that may trigger an antiviral response activating the JAK-STAT pathway and up-regulating specifically some interferon-stimulated genes. In Homo sapiens (Human), this protein is Interferon lambda-4 (IFNL4).